The sequence spans 124 residues: MTWQAYVDNNLLGAGFASAALLGAADGSVWAHSAGFNVAEGKAITALFQKDGAAFATGIHVAGKKYMAIKSDTRSAYGKLGAGGVVCVKTLTCIIVAVYDDKLQPGAAANIAEKLADYLIDNNC.

It belongs to the profilin family. As to quaternary structure, occurs in many kinds of cells as a complex with monomeric actin in a 1:1 ratio. Interacts with forH.

The protein resides in the cytoplasm. The protein localises to the cytoskeleton. Binds to actin and affects the structure of the cytoskeleton. At high concentrations, profilin prevents the polymerization of actin, whereas it enhances it at low concentrations. By binding to PIP2, it inhibits the formation of IP3 and DG. The protein is Profilin-2 (proB) of Dictyostelium discoideum (Social amoeba).